Here is a 106-residue protein sequence, read N- to C-terminus: uncharacterized protein (106 aa).

Transmembrane regions (helical) follow at residues 46–68 and 73–92; these read LLQE…ILAF and AVFI…LIAA.

It localises to the cell membrane. This is an uncharacterized protein from Bacillus subtilis (strain 168).